Consider the following 486-residue polypeptide: CUGBP Elav-like family member 5 (486 aa).

Basic and acidic residues predominate over residues 1–11; the sequence is MARLTEREARR. Positions 1–39 are disordered; the sequence is MARLTEREARRQQQQHPPQQQQPRACPMSGPEPPAQQSD. The segment covering 12 to 24 has biased composition (low complexity); it reads QQQQHPPQQQQPR. RRM domains follow at residues 47 to 128, 135 to 215, and 401 to 479; these read IKLF…PADS, RKLF…FADT, and CNLF…LKRP.

The protein belongs to the CELF/BRUNOL family.

The protein resides in the nucleus. It is found in the cytoplasm. Functionally, RNA-binding protein that may be implicated in the regulation of pre-mRNA alternative splicing. The polypeptide is CUGBP Elav-like family member 5 (celf5) (Xenopus tropicalis (Western clawed frog)).